The chain runs to 255 residues: Indole-3-glycerol phosphate synthase (255 aa).

Belongs to the TrpC family.

The catalysed reaction is 1-(2-carboxyphenylamino)-1-deoxy-D-ribulose 5-phosphate + H(+) = (1S,2R)-1-C-(indol-3-yl)glycerol 3-phosphate + CO2 + H2O. The protein operates within amino-acid biosynthesis; L-tryptophan biosynthesis; L-tryptophan from chorismate: step 4/5. The sequence is that of Indole-3-glycerol phosphate synthase from Shouchella clausii (strain KSM-K16) (Alkalihalobacillus clausii).